The sequence spans 677 residues: Threonine--tRNA ligase (677 aa).

The TGS domain maps to 1-59 (MAQATISITVNGEAKEVEATTTGVELFAEDKNIIAVKINGENRDLYTPLNDGDTVDPIA). The interval 255 to 561 (DHRKLGAEMD…LLEHYAGAFP (307 aa)) is catalytic. Residues Cys-360, His-411, and His-538 each contribute to the Zn(2+) site.

This sequence belongs to the class-II aminoacyl-tRNA synthetase family. In terms of assembly, homodimer. The cofactor is Zn(2+).

It localises to the cytoplasm. It catalyses the reaction tRNA(Thr) + L-threonine + ATP = L-threonyl-tRNA(Thr) + AMP + diphosphate + H(+). Its function is as follows. Catalyzes the attachment of threonine to tRNA(Thr) in a two-step reaction: L-threonine is first activated by ATP to form Thr-AMP and then transferred to the acceptor end of tRNA(Thr). Also edits incorrectly charged L-seryl-tRNA(Thr). The sequence is that of Threonine--tRNA ligase from Bifidobacterium longum (strain NCC 2705).